A 335-amino-acid chain; its full sequence is Glyceraldehyde-3-phosphate dehydrogenase, cytosolic (335 aa).

NAD(+) contacts are provided by residues 13-14 (RI), Asp35, and Arg80. D-glyceraldehyde 3-phosphate-binding positions include 151-153 (SCT), Thr182, 211-212 (TG), and Arg234. Cys152 functions as the Nucleophile in the catalytic mechanism. Residue Asn316 coordinates NAD(+).

This sequence belongs to the glyceraldehyde-3-phosphate dehydrogenase family. As to quaternary structure, homotetramer.

It localises to the cytoplasm. It carries out the reaction D-glyceraldehyde 3-phosphate + phosphate + NAD(+) = (2R)-3-phospho-glyceroyl phosphate + NADH + H(+). It functions in the pathway carbohydrate degradation; glycolysis; pyruvate from D-glyceraldehyde 3-phosphate: step 1/5. This Gracilaria gracilis (Red alga) protein is Glyceraldehyde-3-phosphate dehydrogenase, cytosolic (GAPC).